Reading from the N-terminus, the 442-residue chain is tRNA-2-methylthio-N(6)-dimethylallyladenosine synthase (442 aa).

The region spanning 5 to 122 (KKVFIKTLGC…LPEMIKQKQK (118 aa)) is the MTTase N-terminal domain. [4Fe-4S] cluster is bound by residues C14, C51, C85, C159, C163, and C166. The region spanning 145–378 (KAEGAKAYVS…DLLNSNAQII (234 aa)) is the Radical SAM core domain. One can recognise a TRAM domain in the interval 380–442 (RQMVGTNQRI…LPNSLRGELI (63 aa)).

It belongs to the methylthiotransferase family. MiaB subfamily. In terms of assembly, monomer. The cofactor is [4Fe-4S] cluster.

It is found in the cytoplasm. It catalyses the reaction N(6)-dimethylallyladenosine(37) in tRNA + (sulfur carrier)-SH + AH2 + 2 S-adenosyl-L-methionine = 2-methylsulfanyl-N(6)-dimethylallyladenosine(37) in tRNA + (sulfur carrier)-H + 5'-deoxyadenosine + L-methionine + A + S-adenosyl-L-homocysteine + 2 H(+). Catalyzes the methylthiolation of N6-(dimethylallyl)adenosine (i(6)A), leading to the formation of 2-methylthio-N6-(dimethylallyl)adenosine (ms(2)i(6)A) at position 37 in tRNAs that read codons beginning with uridine. In Francisella tularensis subsp. holarctica (strain FTNF002-00 / FTA), this protein is tRNA-2-methylthio-N(6)-dimethylallyladenosine synthase.